A 61-amino-acid chain; its full sequence is Putative neurotoxin-D (61 aa).

Positions 1–19 (MRTTVAILLVLFALSAILA) are cleaved as a signal peptide. 3 disulfides stabilise this stretch: Cys31-Cys51, Cys37-Cys56, and Cys39-Cys58.

In terms of tissue distribution, expressed by the venom gland.

It localises to the secreted. This is Putative neurotoxin-D from Lychas mucronatus (Chinese swimming scorpion).